Consider the following 39-residue polypeptide: Photosystem II reaction center protein L (39 aa).

Residues 18–38 (SLYWGLLLIFVLAVLFSNYFF) traverse the membrane as a helical segment.

Belongs to the PsbL family. As to quaternary structure, PSII is composed of 1 copy each of membrane proteins PsbA, PsbB, PsbC, PsbD, PsbE, PsbF, PsbH, PsbI, PsbJ, PsbK, PsbL, PsbM, PsbT, PsbX, PsbY, PsbZ, Psb30/Ycf12, at least 3 peripheral proteins of the oxygen-evolving complex and a large number of cofactors. It forms dimeric complexes.

The protein localises to the plastid thylakoid membrane. Its function is as follows. One of the components of the core complex of photosystem II (PSII). PSII is a light-driven water:plastoquinone oxidoreductase that uses light energy to abstract electrons from H(2)O, generating O(2) and a proton gradient subsequently used for ATP formation. It consists of a core antenna complex that captures photons, and an electron transfer chain that converts photonic excitation into a charge separation. This subunit is found at the monomer-monomer interface and is required for correct PSII assembly and/or dimerization. The polypeptide is Photosystem II reaction center protein L (Cuscuta gronovii (Common dodder)).